Reading from the N-terminus, the 316-residue chain is Ornithine carbamoyltransferase (316 aa).

Carbamoyl phosphate is bound by residues 57–60, glutamine 84, arginine 108, and 135–138; these read STRT and HPCQ. L-ornithine contacts are provided by residues asparagine 166, aspartate 230, and 234–235; that span reads SM. Residues 269-270 and arginine 297 each bind carbamoyl phosphate; that span reads CL.

This sequence belongs to the aspartate/ornithine carbamoyltransferase superfamily. OTCase family.

The protein resides in the cytoplasm. It catalyses the reaction carbamoyl phosphate + L-ornithine = L-citrulline + phosphate + H(+). Its pathway is amino-acid degradation; L-arginine degradation via ADI pathway; carbamoyl phosphate from L-arginine: step 2/2. Its function is as follows. Reversibly catalyzes the transfer of the carbamoyl group from carbamoyl phosphate (CP) to the N(epsilon) atom of ornithine (ORN) to produce L-citrulline. The chain is Ornithine carbamoyltransferase from Bacillus anthracis (strain CDC 684 / NRRL 3495).